Consider the following 3066-residue polypeptide: MATIMFGSIAAEIPVIKEAIMIAMPKSKHTLHVVQVEAKHMATEIRSERGKLYVAKRFADNAIKAYDSQLKAFDELLKKNSDLQKRLFIGQNSPIKQKKGGACFVRSLSFKQAEERHAKYLKLQEEEHQFLSGAYGDKAYVGSVQGTLDRKVAEKVSFKSPYYKRTCKAVRQVKVLKKAVGSGKVLDQVLEIVAETGVPVTFVGKGANKTLRAQYVRRYGLVIPKIFLCHESGRKVHREMSYWHHKETLQYLCKHGKYGALNENALCKGDSGLLFDQRTAFVKRVTYLPHFIVRGRQEGQLVCATEYLDNVYTIEHYTHKPEEQFFKGWKQVFDKMAPHTFEHDCTIDYNNEQCGELAATICQTLFPVRKLSCNKCRHRIKDLSWEEFKQFILAHLGCCAKLWEEQKNLPGLEKIHSFVVQATSENMIFETSMEIVRLTQNYTSTHMLQIQDINKALMKGSSATQEDLKKASEQLLAMTRWWKNHMTLTNEDALKTFRNKRSSKALINPSLLCDNQLDRNGNFVWGERGRHSKRFFENFFEEVVPSEGYKKYVIRNNPNGFRKLAIDSLIVPMDLARARIALQGESIKREDLTLACVSKQDGNFVYPCCCVTQDDGRPFYSELKSPTKRHLVVGTSGDPKYIDLPATDSDRMYIAKEGYCYLNIFLAMLVNVNEDEAKDFTKMVRDVVVPKLGTWPSMMDVATAVYIMTVFHPETRSAELPRILVDHASQTMHVIDSFGSLSVGYHVLKAGTVNQLIQFASNDLEGEMKHYRVGGDAEQRMRCERALISSIFKPKKMMQILENDPYTLVLGLVSPTVLIHMFRMKHFEKGVELWINKDQSVVKIFLLLEHLTRKIAMNDVLLEQLEMISQQAGRLHEIICDCPKNIHSYRAVKDFLEVKMEAALTNKELANNGFFDINESLGHVSEKIYAKALEKEWRALSWLEKSSVTWQLKKFSKVTEEHLTKKAAEGRKESSRKFVSACFMNAQTHLGNARITISNKVNEVTNLGVRRIVEMCLRLIHRCYSDMIFLVNISIIFSLFVQMCATLRNTLSIIHRDRTTLARVQAESNERSIMQMYDLMTKAGNGPPKMEDFFKHIEMVRPDLLPTAKYMVQDSEAVDTQAKTQTQLQLEKIVAFMALLTMCIDSERSDAVFKILQKLKSVFGTMGEDVRPQSLDDILDLDEAKQLTVDFDLSTSKESTSTSFDVTFEDWWNRQLQQNRVIPHYRTSGEFLEFTRETAAKVANTITLSTSTEFLIRGAVGSGKSTGLPHHLSKKGKVLLLEPTRPLAENVSKQLGRDPFFHAVTLRMRGLNRFGSSNITVMTSGFAFHYYVNNPHQLSDFDFIIIDECHVLDSATIAFNCALKEFEFPGKLLKVSATPPGRECEFTTQHPVKLKVEEHLSFQQFAQAQGTGSNADMVQYGHNLLVYVASYNEVDQMSRHLLDRQFHVTKVDGRTMQMGNIEIETHGTEGKPHFIVATNIIENGVTLDVDCVIDFGLKVVAQLDSDNRCVRYEKKAVSFGERIQRLGRVGRHKAGFALRIGHTEKSLEEIPEFIATEAAFLSFAYGLPVTTQGVSTNILSRCTVKQARNALNFELTPFFTTNFIRYDGSIHPEVHKLLCKFKLRESEMLLSKLAIPHQYTSQWITVKDYNRIGIQVNCDEKVKIPFYVHGIPDKLFEMLWNTVCKYKCDAGFGRISSVNATKISYTLSTDPSALPRTIAILDHLISEEIMKKNHFDTISSSLTGHSFSLAGIADGIRKRYLKDYTQQNIAILQQARAQLLEFNSNTVDLNNLQNYEDLGVLNTVRLQGKAEVCEFLGLKGKWDGKKFFNDVVVAIFTLIGGGWMLWDYFRHYMQEPVSTQGRKRMMQKLKFRDAFDRKVGREVYADDYTMEHTFGEAYTKKGKQKGSTHTKGMGKKSRGFIHMYGVEPENYSTLRFVDPLTGHTMDESPRVDIRIVQDEFGEIRRQKINEGELDKQAVVARPGLQAYFLGKGTEEALKVDLTPHRPTLLCMNSNAIAGFPEREDELRQTVPMSAVPKPNEVVELESKSTYKGLRDYSSVSTLICRLVNSSDGHNETIYGIGYGSYIITNGHLFRRNNGTLTVKTWHGDFIIPNTTQLKIHFIEGKDAILIRMPRDFPPFAQRSCFRSPKKEERVCMVGTNFQEKSLRSTVSESSIIVPEGKGSFWVHWITTQDGDCGLPMVSVNDGYIVGIHGLTSNETSRNFFVPFIDEFKNKYLDKLEDLTWNKHWLWQPDRIAWGSLNLVDDQPKSEFKISKLVTDLFGSEVSVQSKKDRWVLEAVEGNLVACGQAESALVTKHVVKGKCCHFAQYLSLHPDAQAFFKPLMSAYQPSKLNKEAFKKDFFKYNKPVMLNEVNFEAFEKAVEGVKIMMIEFGFNECVYVTDPDDIYDSLNMKAAVGAQYKGKKQDYFQDMDSFDKERLLFLSCERLFYGQKGIWNGSLKAELRPLEKVQANKTRTFTAAPIDTLLGAKVCVDDFNNQFYSFNLICPWTVGMTKFYGGWDKLMRALPDGWVYCHADGSQFDSSLTPLLLNSVLSIRSFFMEDWWVGKEMLENLYAEIVYTPILTPDGTIFKKFRGNNSGQPSTVVDNTLMVVISMYYSCIKEGWTYDDIQERLVFFANGDDIILAVQKEDVWLYNTLSNSFKELGLNYDFSEQTTKREELWFMSHQAMLIDDIYIPKLEQERIVSILEWDRSKELMHRTEAICAAMIEAWGHTELLTEIRKFYLWLMGKEEFKELALNGKAPYIAETALRKLYTDKDAKMEEMQEYLKQLEFDSDDEVYESVSTQSSKKEEEKDAGADEREKDKGKGPADKDVGAGSKGKVVPRLQKITKKMNLPMVGGRMILNLDHLIEYKPQQTDLYNTRATKAQFERWYEAVKTEYELNDQQMGVVMNGFMVWCIDNGTSPDVNGVWVMMDGDEQIEYPLKPMVENAKPTLRQVMHHFSDAAEAYIEMRNSEGFYMPRYGLLRNLRDKSLARYAFDFYEVNSKTSDRAREAVAQMKAARLANVNTRLFGLDGNVATTSENTERHTARDVNQNMHHLLGMTSGQ.

The Peptidase S30 domain maps to 176–317; it reads LKKAVGSGKV…LDNVYTIEHY (142 aa). Residues His230, Glu239, and Ser271 each act as for P1 proteinase activity in the active site. Positions 370–373 match the Involved in interaction with stylet and aphid transmission motif; the sequence is KLSC. Residues 626 to 628 carry the Involved in virions binding and aphid transmission motif; that stretch reads PTK. The region spanning 652-774 is the Peptidase C6 domain; it reads MYIAKEGYCY…EGEMKHYRVG (123 aa). Catalysis depends on for helper component proteinase activity residues Cys660 and His733. Residues 1245–1397 form the Helicase ATP-binding domain; the sequence is TITLSTSTEF…TQHPVKLKVE (153 aa). 1258-1265 contacts ATP; sequence GAVGSGKS. Residues 1347–1350 carry the DECH box motif; sequence DECH. Residues 1416–1575 form the Helicase C-terminal domain; that stretch reads DMVQYGHNLL…GLPVTTQGVS (160 aa). Residues 1900-1909 carry the Nuclear localization signal motif; the sequence is KKGKQKGSTH. Tyr1924 is subject to O-(5'-phospho-RNA)-tyrosine. The region spanning 2046–2264 is the Peptidase C4 domain; the sequence is SKSTYKGLRD…IAWGSLNLVD (219 aa). Active-site for nuclear inclusion protein A activity residues include His2091, Asp2126, and Cys2196. The region spanning 2530–2654 is the RdRp catalytic domain; that stretch reads WVYCHADGSQ…AVQKEDVWLY (125 aa). A disordered region spans residues 2797 to 2839; sequence EVYESVSTQSSKKEEEKDAGADEREKDKGKGPADKDVGAGSKG. The segment covering 2807–2833 has biased composition (basic and acidic residues); sequence SKKEEEKDAGADEREKDKGKGPADKDV. The residue at position 3048 (Thr3048) is a Phosphothreonine.

Belongs to the potyviridae genome polyprotein family. Interacts with host eIF4E protein (via cap-binding region); this interaction mediates the translation of the VPg-viral RNA conjugates. Part of a complex that comprises VPg, RNA, host EIF4E and EIF4G; this interaction mediates the translation of the VPg-viral RNA conjugates. VPg is uridylylated by the polymerase and is covalently attached to the 5'-end of the genomic RNA. This uridylylated form acts as a nucleotide-peptide primer for the polymerase. Post-translationally, genome polyprotein of potyviruses undergoes post-translational proteolytic processing by the main proteinase NIa-pro resulting in the production of at least ten individual proteins. The P1 proteinase and the HC-pro cleave only their respective C-termini autocatalytically. 6K1 is essential for proper proteolytic separation of P3 from CI.

It localises to the host cytoplasmic vesicle. It is found in the host nucleus. The protein resides in the virion. It catalyses the reaction RNA(n) + a ribonucleoside 5'-triphosphate = RNA(n+1) + diphosphate. The enzyme catalyses Hydrolyzes glutaminyl bonds, and activity is further restricted by preferences for the amino acids in P6 - P1' that vary with the species of potyvirus, e.g. Glu-Xaa-Xaa-Tyr-Xaa-Gln-|-(Ser or Gly) for the enzyme from tobacco etch virus. The natural substrate is the viral polyprotein, but other proteins and oligopeptides containing the appropriate consensus sequence are also cleaved.. It carries out the reaction Hydrolyzes a Gly-|-Gly bond at its own C-terminus, commonly in the sequence -Tyr-Xaa-Val-Gly-|-Gly, in the processing of the potyviral polyprotein.. Functionally, required for aphid transmission and also has proteolytic activity. Only cleaves a Gly-Gly dipeptide at its own C-terminus. Interacts with virions and aphid stylets. Acts as a suppressor of RNA-mediated gene silencing, also known as post-transcriptional gene silencing (PTGS), a mechanism of plant viral defense that limits the accumulation of viral RNAs. May have RNA-binding activity. Has helicase activity. It may be involved in replication. In terms of biological role, indispensable for virus replication. Reduces the abundance of host transcripts related to jasmonic acid biosynthesis therefore altering the host defenses. In order to increase its own stability, decreases host protein degradation pathways. Its function is as follows. Indispensable for virus replication. Functionally, mediates the cap-independent, EIF4E-dependent translation of viral genomic RNAs. Binds to the cap-binding site of host EIF4E and thus interferes with the host EIF4E-dependent mRNA export and translation. VPg-RNA directly binds EIF4E and is a template for transcription. Also forms trimeric complexes with EIF4E-EIF4G, which are templates for translation. Has RNA-binding and proteolytic activities. In terms of biological role, an RNA-dependent RNA polymerase that plays an essential role in the virus replication. Its function is as follows. Involved in aphid transmission, cell-to-cell and systemis movement, encapsidation of the viral RNA and in the regulation of viral RNA amplification. In Bean common mosaic necrosis virus (strain NL-3) (BCMNV), this protein is Genome polyprotein.